We begin with the raw amino-acid sequence, 150 residues long: Arginine repressor (150 aa).

This sequence belongs to the ArgR family.

Its subcellular location is the cytoplasm. The protein operates within amino-acid biosynthesis; L-arginine biosynthesis [regulation]. Functionally, regulates arginine biosynthesis genes. The sequence is that of Arginine repressor from Clostridium kluyveri (strain NBRC 12016).